The sequence spans 547 residues: Chaperonin GroEL 1 (547 aa).

ATP is bound by residues 29 to 32, 86 to 90, Gly-418, 482 to 484, and Asp-498; these read TLGP, DGTTT, and NAA.

This sequence belongs to the chaperonin (HSP60) family. In terms of assembly, forms a cylinder of 14 subunits composed of two heptameric rings stacked back-to-back. Interacts with the co-chaperonin GroES.

It localises to the cytoplasm. The catalysed reaction is ATP + H2O + a folded polypeptide = ADP + phosphate + an unfolded polypeptide.. In terms of biological role, together with its co-chaperonin GroES, plays an essential role in assisting protein folding. The GroEL-GroES system forms a nano-cage that allows encapsulation of the non-native substrate proteins and provides a physical environment optimized to promote and accelerate protein folding. This is Chaperonin GroEL 1 from Corynebacterium jeikeium (strain K411).